The primary structure comprises 672 residues: uncharacterized protein (672 aa).

Positions 1-24 (MKTLKVLKIFIIVYISSVSLESFA) are cleaved as a signal peptide. 2 helical membrane passes run 226 to 246 (IIGA…ALNK) and 254 to 274 (ITLF…LGPL). The span at 363-372 (SNGTSGNNKP) shows a compositional bias: polar residues. Positions 363 to 384 (SNGTSGNNKPIPNFDPDGKKDR) are disordered. The next 4 helical transmembrane spans lie at 410–430 (IILV…LYFI), 436–456 (CMVT…MVLF), 469–489 (VCIS…LLIT), and 562–582 (VVSI…FYYF). Positions 628-646 (HGKSSLGDKPDIGNKRKDG) are enriched in basic and acidic residues. The disordered stretch occupies residues 628–672 (HGKSSLGDKPDIGNKRKDGAQQGEDAVNSSGGEVADLASGSGGGK).

Belongs to the TrbL/VirB6 family.

The protein resides in the cell membrane. This is an uncharacterized protein from Rickettsia prowazekii (strain Madrid E).